Consider the following 82-residue polypeptide: UPF0291 protein PEPE_0871 (82 aa).

The protein belongs to the UPF0291 family.

It localises to the cytoplasm. This Pediococcus pentosaceus (strain ATCC 25745 / CCUG 21536 / LMG 10740 / 183-1w) protein is UPF0291 protein PEPE_0871.